A 163-amino-acid polypeptide reads, in one-letter code: Meiotically up-regulated gene 109 protein (163 aa).

4 helical membrane-spanning segments follow: residues 61–78 (YRFY…FFIW), 82–104 (ALLA…SLTI), 114–134 (YSIP…APVG), and 136–156 (LFWS…LTTY).

The protein resides in the membrane. Has a role in meiosis. In Schizosaccharomyces pombe (strain 972 / ATCC 24843) (Fission yeast), this protein is Meiotically up-regulated gene 109 protein (mug109).